Consider the following 158-residue polypeptide: Transcription elongation factor GreA (158 aa).

This sequence belongs to the GreA/GreB family.

Its function is as follows. Necessary for efficient RNA polymerase transcription elongation past template-encoded arresting sites. The arresting sites in DNA have the property of trapping a certain fraction of elongating RNA polymerases that pass through, resulting in locked ternary complexes. Cleavage of the nascent transcript by cleavage factors such as GreA or GreB allows the resumption of elongation from the new 3'terminus. GreA releases sequences of 2 to 3 nucleotides. This Pelobacter propionicus (strain DSM 2379 / NBRC 103807 / OttBd1) protein is Transcription elongation factor GreA.